We begin with the raw amino-acid sequence, 130 residues long: Fumarate reductase subunit C (130 aa).

3 helical membrane passes run 34–54, 60–80, and 109–129; these read VPAV…KGGV, FVGF…LLAA, and IVKT…AVAL.

It belongs to the FrdC family. In terms of assembly, part of an enzyme complex containing four subunits: a flavoprotein (FrdA), an iron-sulfur protein (FrdB), and two hydrophobic anchor proteins (FrdC and FrdD).

The protein resides in the cell inner membrane. Two distinct, membrane-bound, FAD-containing enzymes are responsible for the catalysis of fumarate and succinate interconversion; fumarate reductase is used in anaerobic growth, and succinate dehydrogenase is used in aerobic growth. Anchors the catalytic components of the fumarate reductase complex to the cell inner membrane, binds quinones. In Serratia proteamaculans (strain 568), this protein is Fumarate reductase subunit C.